The sequence spans 84 residues: Small ribosomal subunit protein uS17 (84 aa).

This sequence belongs to the universal ribosomal protein uS17 family. Part of the 30S ribosomal subunit.

In terms of biological role, one of the primary rRNA binding proteins, it binds specifically to the 5'-end of 16S ribosomal RNA. The sequence is that of Small ribosomal subunit protein uS17 from Borrelia garinii subsp. bavariensis (strain ATCC BAA-2496 / DSM 23469 / PBi) (Borreliella bavariensis).